A 556-amino-acid polypeptide reads, in one-letter code: Chaperone protein HscC (556 aa).

Belongs to the heat shock protein 70 family.

Its function is as follows. Probable chaperone. Has ATPase activity. Not stimulated by DnaJ. The chain is Chaperone protein HscC (hscC) from Escherichia coli (strain K12).